The chain runs to 879 residues: Translation initiation factor IF-2 (879 aa).

2 disordered regions span residues 45–216 and 228–293; these read AGHM…ERKR and SYEE…EKPV. 3 stretches are compositionally biased toward basic and acidic residues: residues 60–72, 83–99, and 107–163; these read NAAKSDNKSDKNS, RKTDARKSQSSEKKISP, and AEKK…ERLQ. A compositionally biased stretch (low complexity) spans 164 to 173; sequence MEAALQAQMQ. Composition is skewed to basic and acidic residues over residues 174 to 216, 228 to 271, and 280 to 291; these read EQER…ERKR, SYEE…ERRN, and RNNDNKKGKFEK. One can recognise a tr-type G domain in the interval 380 to 549; it reads VRAPVVTIMG…LIQAEMLELT (170 aa). The tract at residues 389-396 is G1; it reads GHVDHGKT. 389-396 contacts GTP; sequence GHVDHGKT. The interval 414 to 418 is G2; sequence GITQH. Positions 435–438 are G3; it reads DTPG. Residues 435-439 and 489-492 each bind GTP; these read DTPGH and NKMD. A G4 region spans residues 489–492; sequence NKMD. Residues 525-527 form a G5 region; sequence SAK.

Belongs to the TRAFAC class translation factor GTPase superfamily. Classic translation factor GTPase family. IF-2 subfamily.

The protein resides in the cytoplasm. In terms of biological role, one of the essential components for the initiation of protein synthesis. Protects formylmethionyl-tRNA from spontaneous hydrolysis and promotes its binding to the 30S ribosomal subunits. Also involved in the hydrolysis of GTP during the formation of the 70S ribosomal complex. This is Translation initiation factor IF-2 from Dichelobacter nodosus (strain VCS1703A).